We begin with the raw amino-acid sequence, 55 residues long: Photosystem II reaction center protein K (55 aa).

The propeptide occupies 1-18 (MFYIHLENTFDLSSTILV). A helical transmembrane segment spans residues 26–46 (IFDPIVDVMPIIPLFFFLLAF).

Belongs to the PsbK family. PSII is composed of 1 copy each of membrane proteins PsbA, PsbB, PsbC, PsbD, PsbE, PsbF, PsbH, PsbI, PsbJ, PsbK, PsbL, PsbM, PsbT, PsbX, PsbY, PsbZ, Psb30/Ycf12, at least 3 peripheral proteins of the oxygen-evolving complex and a large number of cofactors. It forms dimeric complexes.

It is found in the plastid. Its subcellular location is the chloroplast thylakoid membrane. Its function is as follows. One of the components of the core complex of photosystem II (PSII). PSII is a light-driven water:plastoquinone oxidoreductase that uses light energy to abstract electrons from H(2)O, generating O(2) and a proton gradient subsequently used for ATP formation. It consists of a core antenna complex that captures photons, and an electron transfer chain that converts photonic excitation into a charge separation. The chain is Photosystem II reaction center protein K from Anthoceros angustus (Hornwort).